The primary structure comprises 50 residues: Defensin D1 (50 aa).

Disulfide bonds link Cys3–Cys50, Cys14–Cys35, Cys20–Cys44, and Cys24–Cys46.

In terms of processing, contains 4 disulfide bonds.

The protein localises to the secreted. Its function is as follows. Antimicrobial peptide active against fungi, Gram-positive and Gram-negative bacteria. Inhibits growth of hyphae in the fungi A.niger (IC(50)=3.5 ug/ml), B.sorokiniana (IC(50)=3.0 ug/ml), F.oxysporum (IC(50)=9.5 ug/ml), F.graminearum (IC(50)=6.9 ug/ml), F.culmorum (IC(50)=6.9 ug/ml) and B.cinerea (IC(50)=27.4 ug/ml). Has no effect on spore germination. Destroys spores in germinated conidia by disruption of cell walls and membranes in A.niger and B.sorokiniana. Causes vacuolization of germinated macro- and microconidia in F.oxysporum, F.graminearum and F.culmorum. Strongly inhibits growth of P.infestans on potato tubers above concentrations of 13.6 ug/ml. Inhibits growth of Gram-positive bacteria C.michiganensis and B.subtilis and of Gram-negative bacteria P.syringae, E.carotovora and E.coli. The chain is Defensin D1 from Nigella sativa (Black cumin).